A 179-amino-acid polypeptide reads, in one-letter code: MIILGVDPGSRATGYGLVDPSGGDEHLVAADTIRLADTDDHPTRLKQIYDALVDVIDAHGPDEFAVEMPVYGQNPQSMLKLGRAQAAAMMAALNRDLPVAQYTPKEVKKSVTGNGNASKKQVGFMIESILSAREQTFAHDTADALAIALCHGNRDAHDDGDSYTGWASFVDANPDRVSE.

Active-site residues include aspartate 7, glutamate 67, and aspartate 140. Residues aspartate 7, glutamate 67, and aspartate 140 each contribute to the Mg(2+) site.

Belongs to the RuvC family. Homodimer which binds Holliday junction (HJ) DNA. The HJ becomes 2-fold symmetrical on binding to RuvC with unstacked arms; it has a different conformation from HJ DNA in complex with RuvA. In the full resolvosome a probable DNA-RuvA(4)-RuvB(12)-RuvC(2) complex forms which resolves the HJ. Requires Mg(2+) as cofactor.

It localises to the cytoplasm. The enzyme catalyses Endonucleolytic cleavage at a junction such as a reciprocal single-stranded crossover between two homologous DNA duplexes (Holliday junction).. Functionally, the RuvA-RuvB-RuvC complex processes Holliday junction (HJ) DNA during genetic recombination and DNA repair. Endonuclease that resolves HJ intermediates. Cleaves cruciform DNA by making single-stranded nicks across the HJ at symmetrical positions within the homologous arms, yielding a 5'-phosphate and a 3'-hydroxyl group; requires a central core of homology in the junction. The consensus cleavage sequence is 5'-(A/T)TT(C/G)-3'. Cleavage occurs on the 3'-side of the TT dinucleotide at the point of strand exchange. HJ branch migration catalyzed by RuvA-RuvB allows RuvC to scan DNA until it finds its consensus sequence, where it cleaves and resolves the cruciform DNA. This Salinibacter ruber (strain DSM 13855 / M31) protein is Crossover junction endodeoxyribonuclease RuvC.